A 447-amino-acid polypeptide reads, in one-letter code: Na(+)-translocating NADH-quinone reductase subunit A (447 aa).

The protein belongs to the NqrA family. In terms of assembly, composed of six subunits; NqrA, NqrB, NqrC, NqrD, NqrE and NqrF.

It catalyses the reaction a ubiquinone + n Na(+)(in) + NADH + H(+) = a ubiquinol + n Na(+)(out) + NAD(+). NQR complex catalyzes the reduction of ubiquinone-1 to ubiquinol by two successive reactions, coupled with the transport of Na(+) ions from the cytoplasm to the periplasm. NqrA to NqrE are probably involved in the second step, the conversion of ubisemiquinone to ubiquinol. This Yersinia pestis bv. Antiqua (strain Angola) protein is Na(+)-translocating NADH-quinone reductase subunit A.